The chain runs to 125 residues: Fluoride-specific ion channel FluC (125 aa).

4 helical membrane passes run 1-21 (MIQALLVAVGGAIGSLLRYYV), 32-52 (AFPWGTLAVNVVGCFVIGVFA), 68-88 (LLITGFLGGFTTFSAFSLDAI), and 101-121 (IYTVASVGLSMAAVMAGLAVM). 2 residues coordinate Na(+): Gly75 and Thr78.

This sequence belongs to the fluoride channel Fluc/FEX (TC 1.A.43) family.

The protein resides in the cell inner membrane. The catalysed reaction is fluoride(in) = fluoride(out). Its activity is regulated as follows. Na(+) is not transported, but it plays an essential structural role and its presence is essential for fluoride channel function. Functionally, fluoride-specific ion channel. Important for reducing fluoride concentration in the cell, thus reducing its toxicity. In Rhizobium leguminosarum bv. trifolii (strain WSM2304), this protein is Fluoride-specific ion channel FluC.